The sequence spans 94 residues: Large ribosomal subunit protein uL23 (94 aa).

The protein belongs to the universal ribosomal protein uL23 family. Part of the 50S ribosomal subunit. Contacts protein L29, and trigger factor when it is bound to the ribosome.

Its function is as follows. One of the early assembly proteins it binds 23S rRNA. One of the proteins that surrounds the polypeptide exit tunnel on the outside of the ribosome. Forms the main docking site for trigger factor binding to the ribosome. The chain is Large ribosomal subunit protein uL23 from Listeria monocytogenes serotype 4b (strain CLIP80459).